We begin with the raw amino-acid sequence, 290 residues long: Bifunctional protein FolD 1 (290 aa).

NADP(+) is bound by residues 172 to 174 (GAS) and isoleucine 238.

The protein belongs to the tetrahydrofolate dehydrogenase/cyclohydrolase family. As to quaternary structure, homodimer.

The catalysed reaction is (6R)-5,10-methylene-5,6,7,8-tetrahydrofolate + NADP(+) = (6R)-5,10-methenyltetrahydrofolate + NADPH. It catalyses the reaction (6R)-5,10-methenyltetrahydrofolate + H2O = (6R)-10-formyltetrahydrofolate + H(+). It functions in the pathway one-carbon metabolism; tetrahydrofolate interconversion. Its function is as follows. Catalyzes the oxidation of 5,10-methylenetetrahydrofolate to 5,10-methenyltetrahydrofolate and then the hydrolysis of 5,10-methenyltetrahydrofolate to 10-formyltetrahydrofolate. This chain is Bifunctional protein FolD 1, found in Pseudomonas putida (strain GB-1).